The sequence spans 227 residues: ATP synthase subunit delta (227 aa).

Belongs to the ATPase delta chain family. As to quaternary structure, F-type ATPases have 2 components, F(1) - the catalytic core - and F(0) - the membrane proton channel. F(1) has five subunits: alpha(3), beta(3), gamma(1), delta(1), epsilon(1). F(0) has three main subunits: a(1), b(2) and c(10-14). The alpha and beta chains form an alternating ring which encloses part of the gamma chain. F(1) is attached to F(0) by a central stalk formed by the gamma and epsilon chains, while a peripheral stalk is formed by the delta and b chains.

The protein localises to the cell inner membrane. Functionally, f(1)F(0) ATP synthase produces ATP from ADP in the presence of a proton or sodium gradient. F-type ATPases consist of two structural domains, F(1) containing the extramembraneous catalytic core and F(0) containing the membrane proton channel, linked together by a central stalk and a peripheral stalk. During catalysis, ATP synthesis in the catalytic domain of F(1) is coupled via a rotary mechanism of the central stalk subunits to proton translocation. Its function is as follows. This protein is part of the stalk that links CF(0) to CF(1). It either transmits conformational changes from CF(0) to CF(1) or is implicated in proton conduction. In Rhodopirellula baltica (strain DSM 10527 / NCIMB 13988 / SH1), this protein is ATP synthase subunit delta.